The sequence spans 137 residues: Large ribosomal subunit protein uL16c (137 aa).

This sequence belongs to the universal ribosomal protein uL16 family. As to quaternary structure, part of the 50S ribosomal subunit.

The protein localises to the plastid. It is found in the chloroplast. The protein is Large ribosomal subunit protein uL16c of Rhodomonas salina (Cryptomonas salina).